A 1778-amino-acid polypeptide reads, in one-letter code: Internalin I (1778 aa).

The first 28 residues, 1–28 (MKKKFSIVIISVLLLGYLAPFDTLLVGA), serve as a signal peptide directing secretion. The interval 36-101 (DTAVKTAEAD…NIKTEINTDK (66 aa)) is disordered. The span at 51–62 (IESETGSDDETA) shows a compositional bias: acidic residues. The span at 63-88 (EEPKEAKEAEASKETTEKEEKAKTEE) shows a compositional bias: basic and acidic residues. 27 LRR repeats span residues 155-179 (AISQ…EGLQ), 183-204 (NLTS…KDLV), 205-227 (NLVS…EDLV), 228-250 (NLQE…ASLP), 251-272 (VLKE…NPAG), 277-298 (ELET…AKLP), 299-321 (KLKN…NGAT), 322-344 (KLQL…SGLS), 345-367 (ELEM…KNLP), 368-389 (NLVN…NNLP), 390-412 (KLQT…TDLP), 413-434 (QLKT…DNLP), 435-456 (KLEK…TDLP), 457-478 (RLSY…KKLP), 479-500 (LLEW…TNFP), 501-522 (SLNY…TELP), 523-544 (SLKE…HDMP), 545-566 (NLRK…DNLP), 567-588 (KLQS…HDLP), 589-610 (SLET…DNLP), 611-632 (DLTY…GDLP), 633-653 (NLET…GTMD), 657-678 (KLRI…GNLS), 685-707 (NLTE…STLS), 708-729 (RLIY…SNLT), 730-751 (NLQE…SDLE), and 752-773 (NLNK…ANMV). An LRRCT domain is found at 785–872 (TYTLPTVLSY…SAAKVTADAE (88 aa)). MucBP domains follow at residues 1510–1569 (DAAA…EQTV), 1575–1634 (AIKP…PQTI), and 1644–1705 (SKKS…SQTV). Residues 1716 to 1742 (SKDDPKVKGKTNQPSSTDTKLKVDNNS) are disordered. Positions 1725-1742 (KTNQPSSTDTKLKVDNNS) are enriched in polar residues. Residues 1743–1747 (LPATG) carry the LPXTG sorting signal motif. Threonine 1746 carries the post-translational modification Pentaglycyl murein peptidoglycan amidated threonine. The propeptide at 1747–1778 (GDTENMILAVLIGFNMLIVASIFLFRKPKTNQ) is removed by sortase.

This sequence belongs to the internalin family.

Its subcellular location is the secreted. The protein localises to the cell wall. A role in virulence could not be demonstrated. This is Internalin I (inlI) from Listeria monocytogenes serovar 1/2a (strain ATCC BAA-679 / EGD-e).